The chain runs to 383 residues: uncharacterized protein (383 aa).

The YcaO domain occupies 58–383 (GKGATRTQAR…RVGRRIRSSI (326 aa)). Residues 80–100 (AERKPEDETFTAHPEDCDGLD) are disordered.

This is an uncharacterized protein from Methanothermobacter thermautotrophicus (strain ATCC 29096 / DSM 1053 / JCM 10044 / NBRC 100330 / Delta H) (Methanobacterium thermoautotrophicum).